A 383-amino-acid polypeptide reads, in one-letter code: ATP phosphoribosyltransferase regulatory subunit (383 aa).

It belongs to the class-II aminoacyl-tRNA synthetase family. HisZ subfamily. As to quaternary structure, heteromultimer composed of HisG and HisZ subunits.

It is found in the cytoplasm. The protein operates within amino-acid biosynthesis; L-histidine biosynthesis; L-histidine from 5-phospho-alpha-D-ribose 1-diphosphate: step 1/9. In terms of biological role, required for the first step of histidine biosynthesis. May allow the feedback regulation of ATP phosphoribosyltransferase activity by histidine. The protein is ATP phosphoribosyltransferase regulatory subunit of Cupriavidus metallidurans (strain ATCC 43123 / DSM 2839 / NBRC 102507 / CH34) (Ralstonia metallidurans).